A 357-amino-acid chain; its full sequence is Glycerol-1-phosphate dehydrogenase [NAD(P)+] (357 aa).

Residues 104–108 and 126–129 each bind NAD(+); these read GKTID and TAAS. D131 contributes to the substrate binding site. S135 lines the NAD(+) pocket. D178 is a binding site for substrate. Residues D178 and H258 each coordinate Zn(2+). H262 contacts substrate. Residue H274 participates in Zn(2+) binding.

This sequence belongs to the glycerol-1-phosphate dehydrogenase family. It depends on Zn(2+) as a cofactor.

Its subcellular location is the cytoplasm. It carries out the reaction sn-glycerol 1-phosphate + NAD(+) = dihydroxyacetone phosphate + NADH + H(+). It catalyses the reaction sn-glycerol 1-phosphate + NADP(+) = dihydroxyacetone phosphate + NADPH + H(+). The protein operates within membrane lipid metabolism; glycerophospholipid metabolism. Its function is as follows. Catalyzes the NAD(P)H-dependent reduction of dihydroxyacetonephosphate (DHAP or glycerone phosphate) to glycerol 1-phosphate (G1P). The G1P thus generated is used as the glycerophosphate backbone of phospholipids in the cellular membranes of Archaea. The chain is Glycerol-1-phosphate dehydrogenase [NAD(P)+] from Methanococcoides burtonii (strain DSM 6242 / NBRC 107633 / OCM 468 / ACE-M).